A 449-amino-acid chain; its full sequence is Kynurenine 3-monooxygenase (449 aa).

The protein belongs to the aromatic-ring hydroxylase family. KMO subfamily. FAD is required as a cofactor.

It catalyses the reaction L-kynurenine + NADPH + O2 + H(+) = 3-hydroxy-L-kynurenine + NADP(+) + H2O. It functions in the pathway cofactor biosynthesis; NAD(+) biosynthesis; quinolinate from L-kynurenine: step 1/3. Catalyzes the hydroxylation of L-kynurenine (L-Kyn) to form 3-hydroxy-L-kynurenine (L-3OHKyn). Required for synthesis of quinolinic acid. The polypeptide is Kynurenine 3-monooxygenase (Cytophaga hutchinsonii (strain ATCC 33406 / DSM 1761 / CIP 103989 / NBRC 15051 / NCIMB 9469 / D465)).